Reading from the N-terminus, the 2340-residue chain is Protein pad-1 (2340 aa).

Disordered regions lie at residues 411–458 and 1910–1959; these read KLIK…EPSI and TRNS…RRDP. Over residues 415 to 432 the composition is skewed to basic and acidic residues; that stretch reads KRPDSKPPRKPGDREGLH. The segment covering 437 to 448 has biased composition (polar residues); that stretch reads SLHSGVSGNSED. Low complexity predominate over residues 1922 to 1934; the sequence is GGSITSGSTSTTT.

This sequence belongs to the DOP1 family.

Essential for cell patterning during gastrulation. May be involved in protein traffic between late Golgi and early endosomes. The chain is Protein pad-1 (pad-1) from Caenorhabditis briggsae.